A 460-amino-acid chain; its full sequence is Proline--tRNA ligase (460 aa).

Belongs to the class-II aminoacyl-tRNA synthetase family. ProS type 3 subfamily. Homodimer.

The protein localises to the cytoplasm. It carries out the reaction tRNA(Pro) + L-proline + ATP = L-prolyl-tRNA(Pro) + AMP + diphosphate. Its function is as follows. Catalyzes the attachment of proline to tRNA(Pro) in a two-step reaction: proline is first activated by ATP to form Pro-AMP and then transferred to the acceptor end of tRNA(Pro). This is Proline--tRNA ligase from Methanococcus maripaludis (strain C6 / ATCC BAA-1332).